A 233-amino-acid chain; its full sequence is MENKVTAYSIYNKKAKKNTKVNPLDEVFPQLPRKKYQVIYADPPWDYGGKMQYDKSTIKSENEGFKRDIFISSASFKYPTLKLKELQQLDVPSITADDCILFMWTTGPQMANSILLGESWGFEYKTVAFVWDKMVHNPGRYTLSQTEFVLVFKKGKIPTPRGARNVRQLLQIHRGQHSEKPYAVIDGITKMFPALDKIELFARNNFVGWDNWGLEIPDNKIEIPTQGEIDENK.

This sequence belongs to the MT-A70-like family.

It catalyses the reaction a 2'-deoxyadenosine in DNA + S-adenosyl-L-methionine = an N(6)-methyl-2'-deoxyadenosine in DNA + S-adenosyl-L-homocysteine + H(+). Functionally, a methylase that recognizes the double-stranded sequence 5'-CAATTG-3', methylates A-3 on both strands, and protects the DNA from cleavage by the MunI endonuclease. The chain is Type II methyltransferase M.MunI from Mycoplasma sp.